A 205-amino-acid chain; its full sequence is Small ribosomal subunit protein mS26 (205 aa).

Residues Met1–Arg27 constitute a mitochondrion transit peptide.

This sequence belongs to the mitochondrion-specific ribosomal protein mS26 family. In terms of assembly, component of the mitochondrial small ribosomal subunit (mt-SSU). Mature mammalian 55S mitochondrial ribosomes consist of a small (28S) and a large (39S) subunit. The 28S small subunit contains a 12S ribosomal RNA (12S mt-rRNA) and 30 different proteins. The 39S large subunit contains a 16S rRNA (16S mt-rRNA), a copy of mitochondrial valine transfer RNA (mt-tRNA(Val)), which plays an integral structural role, and 52 different proteins.

The protein resides in the mitochondrion. This chain is Small ribosomal subunit protein mS26 (MRPS26), found in Homo sapiens (Human).